A 109-amino-acid chain; its full sequence is MSDKIIHLTDDSFDTDVLKADGAILVDFWAEWCGPCKMIAPILDEIADEYQGKLTVAKLNIDQNPGTAPKYGIRGIPTLLLFKNGEVAATKVGALSKGQLKEFLDANLA.

The Thioredoxin domain occupies 2–109; sequence SDKIIHLTDD…LKEFLDANLA (108 aa). Residues Cys-33 and Cys-36 each act as nucleophile in the active site. A disulfide bridge connects residues Cys-33 and Cys-36. The residue at position 70 (Lys-70) is an N6-acetyllysine.

Belongs to the thioredoxin family. In terms of assembly, monomer.

In terms of biological role, participates in various redox reactions through the reversible oxidation of its active center dithiol to a disulfide and catalyzes dithiol-disulfide exchange reactions. The sequence is that of Thioredoxin 1 (trxA) from Escherichia coli O157:H7.